Consider the following 277-residue polypeptide: Bifunctional protein FolD (277 aa).

NADP(+)-binding positions include 160 to 162 (GAS), Ser-185, and Ile-226.

This sequence belongs to the tetrahydrofolate dehydrogenase/cyclohydrolase family. In terms of assembly, homodimer.

The catalysed reaction is (6R)-5,10-methylene-5,6,7,8-tetrahydrofolate + NADP(+) = (6R)-5,10-methenyltetrahydrofolate + NADPH. It carries out the reaction (6R)-5,10-methenyltetrahydrofolate + H2O = (6R)-10-formyltetrahydrofolate + H(+). The protein operates within one-carbon metabolism; tetrahydrofolate interconversion. Functionally, catalyzes the oxidation of 5,10-methylenetetrahydrofolate to 5,10-methenyltetrahydrofolate and then the hydrolysis of 5,10-methenyltetrahydrofolate to 10-formyltetrahydrofolate. The polypeptide is Bifunctional protein FolD (Ruthia magnifica subsp. Calyptogena magnifica).